The primary structure comprises 432 residues: Lysosomal acid phosphatase (432 aa).

The first 32 residues, 1–32 (MADGSCLGSGPQLGLIALLVVLLFSAVPLAQS), serve as a signal peptide directing secretion. At 33 to 384 (RELRFVTLVY…TTSFIMTEET (352 aa)) the chain is on the lumenal side. The active-site Nucleophile is the His44. N-linked (GlcNAc...) asparagine glycans are attached at residues Asn94, Asn135, Asn179, Asn193, and Asn269. 3 disulfide bridges follow: Cys161-Cys373, Cys214-Cys313, and Cys348-Cys352. Asp290 functions as the Proton donor in the catalytic mechanism. N-linked (GlcNAc...) asparagine glycosylation is found at Asn325 and Asn334. The helical transmembrane segment at 385-405 (IIGLTIGAIALFIIIVVLMLL) threads the bilayer. Topologically, residues 406–432 (SCNEPKDDGYQHVSDEGDDHETKGLAM) are cytoplasmic.

The protein belongs to the histidine acid phosphatase family. Post-translationally, the membrane-bound form is converted to the soluble form by sequential proteolytic processing. First, the C-terminal cytoplasmic tail is removed. Cleavage by a lysosomal protease releases the soluble form in the lysosome lumen.

It localises to the lysosome membrane. Its subcellular location is the lysosome lumen. It carries out the reaction a phosphate monoester + H2O = an alcohol + phosphate. The chain is Lysosomal acid phosphatase (acp2) from Xenopus laevis (African clawed frog).